A 510-amino-acid chain; its full sequence is Histidine ammonia-lyase (510 aa).

Residues 143-145 (ASG) constitute a cross-link (5-imidazolinone (Ala-Gly)). Position 144 is a 2,3-didehydroalanine (Ser) (Ser144).

This sequence belongs to the PAL/histidase family. Post-translationally, contains an active site 4-methylidene-imidazol-5-one (MIO), which is formed autocatalytically by cyclization and dehydration of residues Ala-Ser-Gly.

Its subcellular location is the cytoplasm. It catalyses the reaction L-histidine = trans-urocanate + NH4(+). Its pathway is amino-acid degradation; L-histidine degradation into L-glutamate; N-formimidoyl-L-glutamate from L-histidine: step 1/3. The protein is Histidine ammonia-lyase of Shewanella piezotolerans (strain WP3 / JCM 13877).